The primary structure comprises 285 residues: Small ribosomal subunit protein uS2 (285 aa).

Positions 231-285 (GGKSGQAAAEPMAEWERELLEQHNAQQAEQAEAPAAEAPAEPAEAPAAEAAPQGE) are disordered. Positions 255–285 (AQQAEQAEAPAAEAPAEPAEAPAAEAAPQGE) are enriched in low complexity.

The protein belongs to the universal ribosomal protein uS2 family.

This Micrococcus luteus (strain ATCC 4698 / DSM 20030 / JCM 1464 / CCM 169 / CCUG 5858 / IAM 1056 / NBRC 3333 / NCIMB 9278 / NCTC 2665 / VKM Ac-2230) (Micrococcus lysodeikticus) protein is Small ribosomal subunit protein uS2.